The primary structure comprises 131 residues: Small ribosomal subunit protein bS18 (131 aa).

Positions 1–10 (MSNGTDSKTA) are enriched in polar residues. A disordered region spans residues 1-60 (MSNGTDSKTASAPPARSGGGFGGGGSRGGDRGDRGDRGGDRGDRGGGLGGDDDKRGGGRG). A compositionally biased stretch (gly residues) spans 17-27 (SGGGFGGGGSR). Residues 28 to 44 (GGDRGDRGDRGGDRGDR) show a composition bias toward basic and acidic residues.

Belongs to the bacterial ribosomal protein bS18 family. As to quaternary structure, part of the 30S ribosomal subunit. Forms a tight heterodimer with protein bS6.

In terms of biological role, binds as a heterodimer with protein bS6 to the central domain of the 16S rRNA, where it helps stabilize the platform of the 30S subunit. This is Small ribosomal subunit protein bS18 from Myxococcus xanthus (strain DK1622).